A 149-amino-acid chain; its full sequence is Ribonuclease pancreatic alpha-type (149 aa).

Residues 1–25 (MGLEKSFILFSLLVLVLGWVQPSLG) form the signal peptide. Substrate-binding residues include Lys-32 and Arg-35. The active-site Proton acceptor is His-37. Intrachain disulfides connect Cys-51–Cys-109, Cys-65–Cys-120, Cys-83–Cys-135, and Cys-90–Cys-97. Residues 66–70 (KPVNT), Lys-91, and Arg-110 each bind substrate. His-144 (proton donor) is an active-site residue.

This sequence belongs to the pancreatic ribonuclease family. Monomer.

The protein localises to the secreted. The enzyme catalyses an [RNA] containing cytidine + H2O = an [RNA]-3'-cytidine-3'-phosphate + a 5'-hydroxy-ribonucleotide-3'-[RNA].. The catalysed reaction is an [RNA] containing uridine + H2O = an [RNA]-3'-uridine-3'-phosphate + a 5'-hydroxy-ribonucleotide-3'-[RNA].. In terms of biological role, endonuclease that catalyzes the cleavage of RNA on the 3' side of pyrimidine nucleotides. Acts on single-stranded and double-stranded RNA. In Rattus fuscipes (Bush rat), this protein is Ribonuclease pancreatic alpha-type.